We begin with the raw amino-acid sequence, 560 residues long: Dihydroxy-acid dehydratase (560 aa).

D80 serves as a coordination point for Mg(2+). C121 is a binding site for [2Fe-2S] cluster. Mg(2+) contacts are provided by D122 and K123. K123 carries the N6-carboxylysine modification. Residue C194 participates in [2Fe-2S] cluster binding. Position 447 (E447) interacts with Mg(2+). Catalysis depends on S473, which acts as the Proton acceptor.

It belongs to the IlvD/Edd family. In terms of assembly, homodimer. Requires [2Fe-2S] cluster as cofactor. It depends on Mg(2+) as a cofactor.

The enzyme catalyses (2R)-2,3-dihydroxy-3-methylbutanoate = 3-methyl-2-oxobutanoate + H2O. The catalysed reaction is (2R,3R)-2,3-dihydroxy-3-methylpentanoate = (S)-3-methyl-2-oxopentanoate + H2O. The protein operates within amino-acid biosynthesis; L-isoleucine biosynthesis; L-isoleucine from 2-oxobutanoate: step 3/4. It participates in amino-acid biosynthesis; L-valine biosynthesis; L-valine from pyruvate: step 3/4. Its function is as follows. Functions in the biosynthesis of branched-chain amino acids. Catalyzes the dehydration of (2R,3R)-2,3-dihydroxy-3-methylpentanoate (2,3-dihydroxy-3-methylvalerate) into 2-oxo-3-methylpentanoate (2-oxo-3-methylvalerate) and of (2R)-2,3-dihydroxy-3-methylbutanoate (2,3-dihydroxyisovalerate) into 2-oxo-3-methylbutanoate (2-oxoisovalerate), the penultimate precursor to L-isoleucine and L-valine, respectively. This Chlorobaculum tepidum (strain ATCC 49652 / DSM 12025 / NBRC 103806 / TLS) (Chlorobium tepidum) protein is Dihydroxy-acid dehydratase.